The following is a 154-amino-acid chain: Ascorbate-specific PTS system EIIA component (154 aa).

One can recognise a PTS EIIA type-2 domain in the interval 6–150 (SLAENKSIRL…QEVLDLIDRT (145 aa)). His-68 (tele-phosphohistidine intermediate) is an active-site residue. His-68 is modified (phosphohistidine).

It localises to the cytoplasm. In terms of biological role, the phosphoenolpyruvate-dependent sugar phosphotransferase system (sugar PTS), a major carbohydrate active transport system, catalyzes the phosphorylation of incoming sugar substrates concomitantly with their translocation across the cell membrane. The enzyme II UlaABC PTS system is involved in ascorbate transport. The polypeptide is Ascorbate-specific PTS system EIIA component (ulaC) (Escherichia coli O157:H7).